A 411-amino-acid polypeptide reads, in one-letter code: MMP alpha-(1-&gt;4)-mannosyltransferase (411 aa).

This sequence belongs to the glycosyltransferase group 1 family. Glycosyltransferase 4 subfamily.

It catalyses the reaction [3-O-methyl-alpha-D-mannosyl-(1-&gt;4)](n)-3-O-methyl-D-mannose + GDP-alpha-D-mannose = alpha-D-mannosyl-(1-&gt;4)-[3-O-methyl-alpha-D-mannosyl-(1-&gt;4)](n)-3-O-methyl-D-mannose + GDP + H(+). It carries out the reaction [3-O-methyl-alpha-D-mannosyl-(1-&gt;4)](n)-1-O,3-O-dimethyl-alpha-D-mannose + GDP-alpha-D-mannose = alpha-D-mannosyl-(1-&gt;4)-[3-O-methyl-alpha-D-mannosyl-(1-&gt;4)](n)-1-O,3-O-dimethyl-alpha-D-mannose + GDP + H(+). Its activity is regulated as follows. Activity is significantly enhanced in the presence of Mg(2+). Functionally, glycosyltransferase involved in the biosynthesis of 3-O-methylmannose polysaccharides (MMP), which are intracellular polymethylated polysaccharides implicated in the modulation of fatty acid metabolism in non-tuberculous mycobacteria. Highly specific alpha-(1-&gt;4)-mannosyltransferase that can transfer mannose units from GDP-mannose to a wide range of alpha-(1-&gt;4) oligomannosides longer than three mannoses, including all hydrolytic products of MmpH. Can use synthetic trimannosides and tetramannosides as substrates, but not mono- and disaccharides, and is significantly more active with the methylated substrates, preferring the tetramannosides over the trimannosides. The polypeptide is MMP alpha-(1-&gt;4)-mannosyltransferase (Mycolicibacterium hassiacum (strain DSM 44199 / CIP 105218 / JCM 12690 / 3849) (Mycobacterium hassiacum)).